The chain runs to 537 residues: MPSDSMTDLPETRANAPEWTVSELSFALRRTVEDAYGHVRVRGEISGYRGPHSSGHAYFSIKDEGARLDAVIWKSAFARLKLRPEEGLEVVAVGKLTTYPGKSGYQIVIESLEFAGAGAIMAMLEERKRRLAAEGLFDAARKQELPFLPKVIGVVTSPTGAVIRDILHRLSDRFPRQVIVWPVRVQGETSAAEVAEAIRGFNALPEGGPIPRPDVLIVARGGGSLEDLLGFSDEAVVRAAAESFIPLVSAVGHETDVTLIDFAADVRAPTPTAAAEMVVPVRADLLAGIDAYGERLSAAPRRLLERRRADFRALARHLPTADALLAVPRQRLDAAGERLPRALRANAAAHRLAFEAVRTRHSASAFRLRLARAQDRVAALGGRLQWGLTGLVSRRSERLSAMTARFGSARAASLRAHVLHLSRCRERLSVLSTRAQRAVRHDLRERTNRLAAMEQLLKALSYRGVLARGFALVRDAQGGAVRAAGAVVPGARLELEFADGRLGVQALGEGAPVEPPQAARPSKGARTKAAQPSLFDD.

The interval 508 to 537 is disordered; the sequence is GEGAPVEPPQAARPSKGARTKAAQPSLFDD.

The protein belongs to the XseA family. As to quaternary structure, heterooligomer composed of large and small subunits.

The protein resides in the cytoplasm. It carries out the reaction Exonucleolytic cleavage in either 5'- to 3'- or 3'- to 5'-direction to yield nucleoside 5'-phosphates.. In terms of biological role, bidirectionally degrades single-stranded DNA into large acid-insoluble oligonucleotides, which are then degraded further into small acid-soluble oligonucleotides. The protein is Exodeoxyribonuclease 7 large subunit of Azorhizobium caulinodans (strain ATCC 43989 / DSM 5975 / JCM 20966 / LMG 6465 / NBRC 14845 / NCIMB 13405 / ORS 571).